Consider the following 165-residue polypeptide: Nucleotide-binding protein Syncc9605_0652 (165 aa).

The protein belongs to the YajQ family.

Nucleotide-binding protein. This Synechococcus sp. (strain CC9605) protein is Nucleotide-binding protein Syncc9605_0652.